A 451-amino-acid chain; its full sequence is UPF0210 protein NMCC_1554 (451 aa).

Belongs to the UPF0210 family. In terms of assembly, homodimer.

The chain is UPF0210 protein NMCC_1554 from Neisseria meningitidis serogroup C (strain 053442).